The following is a 76-amino-acid chain: Conotoxin Cal29b (76 aa).

A signal peptide spans 1-43 (MKLTCVLIVAVLILAACQFTAANMARYGKTQIARSDVKSIDAR).

This sequence belongs to the conotoxin O1 superfamily. May contain 4 disulfide bonds. Expressed by the venom duct.

The protein resides in the secreted. Is able to inhibit the growth of Mycobacterium tuberculosis (MIC=0.22-3.52 uM against strain H37Rv and 2 multidrug-resistant strains). May also show neurotoxic activity. The polypeptide is Conotoxin Cal29b (Californiconus californicus (California cone)).